The primary structure comprises 833 residues: EF-hand domain-containing family member B (833 aa).

2 consecutive EF-hand domains span residues 561–596 (QKFDTLLAAFRHYDKKGDGMIDKDELQEACDQANLS) and 597–632 (LDDKLLDQLFDYCDVDNDGFINYLEFANFLNWKDKM). Ca(2+)-binding residues include D574, D578, M580, E585, D610, D612, D614, and E621.

As to quaternary structure, microtubule inner protein component of sperm flagellar doublet microtubules. Interacts with STIM1 and ORAI1; the interactions take place upon Ca(2+)-store depletion and dissociate through a Ca(2+)-dependent mechanism. Interaction with STIM1 inhibits STIM1 interaction with SARAF. Expressed in airway epithelial cells.

It is found in the cytoplasm. The protein resides in the cytoskeleton. Its subcellular location is the cilium axoneme. It localises to the flagellum axoneme. Microtubule inner protein (MIP) part of the dynein-decorated doublet microtubules (DMTs) in cilia axoneme, which is required for motile cilia beating. Cytosolic sensor for calcium, modulates the interaction of STIM1 and ORAI1 upon store depletion and the activation of store-operated Ca(2+) entry (SOCE) and NFAT translocation from cytosol to nucleus. This chain is EF-hand domain-containing family member B, found in Homo sapiens (Human).